An 87-amino-acid polypeptide reads, in one-letter code: Large ribosomal subunit protein bL31B (87 aa).

Belongs to the bacterial ribosomal protein bL31 family. Type B subfamily. Part of the 50S ribosomal subunit.

This Paraburkholderia phymatum (strain DSM 17167 / CIP 108236 / LMG 21445 / STM815) (Burkholderia phymatum) protein is Large ribosomal subunit protein bL31B.